Reading from the N-terminus, the 1525-residue chain is Dicer-like protein 1 (1525 aa).

The segment covering 37 to 52 (DLQEDDGSSDESDNDE) has biased composition (acidic residues). Residues 37-65 (DLQEDDGSSDESDNDEREDHSKTGVSQQR) are disordered. In terms of domain architecture, Helicase ATP-binding spans 124–305 (LFERAKVQNT…DEATRLEKLL (182 aa)). 137–144 (LDTGSGKT) is a binding site for ATP. Positions 250-253 (DEAH) match the DEAH box motif. Positions 439-605 (QLSPKVQVLR…SFCRTLPEDR (167 aa)) constitute a Helicase C-terminal domain. The region spanning 641-731 (ATAILARYAS…NSIYHRRLPA (91 aa)) is the Dicer dsRNA-binding fold domain. A PAZ domain is found at 881–1009 (ESLTYVRDND…ICIEPLKVSA (129 aa)). RNase III domains are found at residues 1032 to 1192 (LISL…LSGG) and 1243 to 1394 (SRKI…VDSD). Glu-1283, Asp-1380, and Glu-1383 together coordinate Mg(2+). Residues 1428–1496 (TFLHNRLTNE…SEKALAVLDE (69 aa)) enclose the DRBM domain. Zn(2+) contacts are provided by Cys-1440, His-1467, Cys-1508, and Cys-1510.

The protein belongs to the helicase family. Dicer subfamily. It depends on Mg(2+) as a cofactor. Mn(2+) serves as cofactor.

Functionally, dicer-like endonuclease involved in cleaving double-stranded RNA in the RNA interference (RNAi) pathway. Produces 21 to 25 bp dsRNAs (siRNAs) which target the selective destruction of homologous RNAs leading to sequence-specific suppression of gene expression, called post-transcriptional gene silencing (PTGS). Part of a broad host defense response against viral infection and transposons. This chain is Dicer-like protein 1 (dcl1), found in Aspergillus niger (strain ATCC MYA-4892 / CBS 513.88 / FGSC A1513).